Reading from the N-terminus, the 245-residue chain is Ribonuclease 3 (245 aa).

The RNase III domain maps to 19–148; sequence FRAFQQKLGI…FIGALYLDQG (130 aa). Position 61 (Glu-61) interacts with Mg(2+). The active site involves Asp-65. The Mg(2+) site is built by Asp-134 and Glu-137. The active site involves Glu-137. One can recognise a DRBM domain in the interval 174–243; the sequence is DYKSQLQELI…AAEALRKLKE (70 aa).

This sequence belongs to the ribonuclease III family. In terms of assembly, homodimer. Requires Mg(2+) as cofactor.

It localises to the cytoplasm. The catalysed reaction is Endonucleolytic cleavage to 5'-phosphomonoester.. Digests double-stranded RNA. Involved in the processing of primary rRNA transcript to yield the immediate precursors to the large and small rRNAs (23S and 16S). Processes some mRNAs, and tRNAs when they are encoded in the rRNA operon. Processes pre-crRNA and tracrRNA of type II CRISPR loci if present in the organism. This Bacillus cytotoxicus (strain DSM 22905 / CIP 110041 / 391-98 / NVH 391-98) protein is Ribonuclease 3.